The sequence spans 157 residues: NADPH-dependent 7-cyano-7-deazaguanine reductase (157 aa).

The active-site Thioimide intermediate is the C55. The active-site Proton donor is D62. Residues 77 to 79 (VES) and 96 to 97 (HE) contribute to the substrate site.

It belongs to the GTP cyclohydrolase I family. QueF type 1 subfamily.

The protein resides in the cytoplasm. It catalyses the reaction 7-aminomethyl-7-carbaguanine + 2 NADP(+) = 7-cyano-7-deazaguanine + 2 NADPH + 3 H(+). The protein operates within tRNA modification; tRNA-queuosine biosynthesis. Its function is as follows. Catalyzes the NADPH-dependent reduction of 7-cyano-7-deazaguanine (preQ0) to 7-aminomethyl-7-deazaguanine (preQ1). This chain is NADPH-dependent 7-cyano-7-deazaguanine reductase, found in Neisseria gonorrhoeae (strain ATCC 700825 / FA 1090).